The chain runs to 1025 residues: Multidrug resistance protein MdtC (1025 aa).

12 helical membrane passes run 3–23, 333–353, 360–380, 387–407, 431–451, 463–483, 528–548, 853–873, 875–895, 897–917, 953–973, and 984–1004; these read FFAL…AITL, EVEQ…FLFL, IIPA…MYLC, LSLM…IVVL, VGFT…PLLL, FAVT…TLTP, LVGM…ISIP, VILI…LYES, VHPL…LLAL, LFNA…IGIV, PIMM…LSGG, and ITIV…TPVV.

The protein belongs to the resistance-nodulation-cell division (RND) (TC 2.A.6) family. MdtC subfamily. In terms of assembly, part of a tripartite efflux system composed of MdtA, MdtB and MdtC. MdtC forms a heteromultimer with MdtB.

The protein resides in the cell inner membrane. In terms of biological role, the MdtABC tripartite complex confers resistance against novobiocin and deoxycholate. The protein is Multidrug resistance protein MdtC of Escherichia coli O157:H7 (strain EC4115 / EHEC).